The following is a 122-amino-acid chain: Large ribosomal subunit protein uL14 (122 aa).

It belongs to the universal ribosomal protein uL14 family. In terms of assembly, part of the 50S ribosomal subunit. Forms a cluster with proteins L3 and L19. In the 70S ribosome, L14 and L19 interact and together make contacts with the 16S rRNA in bridges B5 and B8.

Binds to 23S rRNA. Forms part of two intersubunit bridges in the 70S ribosome. The chain is Large ribosomal subunit protein uL14 from Sinorhizobium fredii (strain NBRC 101917 / NGR234).